The following is a 471-amino-acid chain: Tryptophanase (471 aa).

At Lys-270 the chain carries N6-(pyridoxal phosphate)lysine.

It belongs to the beta-eliminating lyase family. As to quaternary structure, homotetramer. Pyridoxal 5'-phosphate serves as cofactor.

The catalysed reaction is L-tryptophan + H2O = indole + pyruvate + NH4(+). The protein operates within amino-acid degradation; L-tryptophan degradation via pyruvate pathway; indole and pyruvate from L-tryptophan: step 1/1. In Histophilus somni (strain 2336) (Haemophilus somnus), this protein is Tryptophanase.